The sequence spans 122 residues: Large ribosomal subunit protein bL12 (122 aa).

The protein belongs to the bacterial ribosomal protein bL12 family. In terms of assembly, homodimer. Part of the ribosomal stalk of the 50S ribosomal subunit. Forms a multimeric L10(L12)X complex, where L10 forms an elongated spine to which 2 to 4 L12 dimers bind in a sequential fashion. Binds GTP-bound translation factors.

In terms of biological role, forms part of the ribosomal stalk which helps the ribosome interact with GTP-bound translation factors. Is thus essential for accurate translation. The sequence is that of Large ribosomal subunit protein bL12 from Myxococcus xanthus (strain DK1622).